The primary structure comprises 346 residues: GTP 3',8-cyclase (346 aa).

One can recognise a Radical SAM core domain in the interval 10–240 (QRSRPLRVLR…VTRIRARWPL (231 aa)). GTP is bound at residue arginine 19. [4Fe-4S] cluster is bound by residues cysteine 26 and cysteine 30. Residue tyrosine 32 participates in S-adenosyl-L-methionine binding. Cysteine 33 lines the [4Fe-4S] cluster pocket. Arginine 65 contributes to the GTP binding site. An S-adenosyl-L-methionine-binding site is contributed by glycine 69. Threonine 104 provides a ligand contact to GTP. Serine 129 is a binding site for S-adenosyl-L-methionine. A GTP-binding site is contributed by lysine 177. Methionine 211 is an S-adenosyl-L-methionine binding site. Positions 274 and 277 each coordinate [4Fe-4S] cluster. 279-281 (RLR) is a binding site for GTP. Cysteine 291 is a binding site for [4Fe-4S] cluster. A disordered region spans residues 326–346 (SDERQQTTGSMPHAEMAYLGG).

The protein belongs to the radical SAM superfamily. MoaA family. Monomer and homodimer. The cofactor is [4Fe-4S] cluster.

It carries out the reaction GTP + AH2 + S-adenosyl-L-methionine = (8S)-3',8-cyclo-7,8-dihydroguanosine 5'-triphosphate + 5'-deoxyadenosine + L-methionine + A + H(+). It participates in cofactor biosynthesis; molybdopterin biosynthesis. In terms of biological role, catalyzes the cyclization of GTP to (8S)-3',8-cyclo-7,8-dihydroguanosine 5'-triphosphate. The sequence is that of GTP 3',8-cyclase from Parasynechococcus marenigrum (strain WH8102).